The chain runs to 71 residues: Dermaseptin-PT9 (71 aa).

Residues 1–22 (MAFLKKSLFLVLFLGLVSLSIC) form the signal peptide. A propeptide spanning residues 23-43 (EEEKRENEMEQEDDEQSEMKR) is cleaved from the precursor. At valine 68 the chain carries Valine amide. Positions 69–71 (GEQ) are excised as a propeptide.

Belongs to the frog skin active peptide (FSAP) family. Dermaseptin subfamily. As to expression, expressed by the skin glands.

Its subcellular location is the secreted. The protein resides in the target cell membrane. Antimicrobial peptide with activity against fungi, Gram-positive and Gram-negative bacteria. Is active against S.aureus (MIC=16 uM), MRSA (MIC=32 uM), E.faecalis (MIC=16 uM), E.coli (MIC=8 uM), P.aeruginosa (MIC=16 uM), K.pneumoniae (MIC=8 uM), and C.albicans (MIC=64 uM). Also inhibits biofilm formation. Acts by disrupting cell membranes. Also exhibits anti-proliferative effect against various human cancer cells. Shows weak hemolytic activity towards horse erythrocytes. The chain is Dermaseptin-PT9 from Phyllomedusa tarsius (Brownbelly leaf frog).